We begin with the raw amino-acid sequence, 863 residues long: Leucine--tRNA ligase (863 aa).

The 'HIGH' region signature appears at 42–52 (PYPSGKIHMGH). Residues 618–622 (KMSKS) carry the 'KMSKS' region motif. An ATP-binding site is contributed by Lys621.

Belongs to the class-I aminoacyl-tRNA synthetase family.

The protein resides in the cytoplasm. The catalysed reaction is tRNA(Leu) + L-leucine + ATP = L-leucyl-tRNA(Leu) + AMP + diphosphate. The protein is Leucine--tRNA ligase of Desulfatibacillum aliphaticivorans.